Consider the following 266-residue polypeptide: HLA class II histocompatibility antigen, DR beta 3 chain (266 aa).

A signal peptide spans 1-29 (MVCLKLPGGSSLAALTVTLMVLSSRLAFA). The beta-1 stretch occupies residues 30-124 (GDTRPRFLEL…GESFTVQRRV (95 aa)). Topologically, residues 30-227 (GDTRPRFLEL…RARSESAQSK (198 aa)) are extracellular. Intrachain disulfides connect Cys44-Cys108 and Cys146-Cys202. Asn48 carries N-linked (GlcNAc...) asparagine glycosylation. Residues 125 to 227 (HPQVTVYPAK…RARSESAQSK (103 aa)) are beta-2. The region spanning 126–214 (PQVTVYPAKT…EHPSVTSALT (89 aa)) is the Ig-like C1-type domain. A helical membrane pass occupies residues 228–248 (MLSGVGGFVLGLLFLGAGLFI). Residues 249-266 (YFRNQKGHSGLQPTGFLS) are Cytoplasmic-facing.

Belongs to the MHC class II family. Heterotrimer that consists of an alpha chain HLA-DRA, a beta chain HLA-DRB1 and a peptide (peptide-MHCII). Newly synthesized alpha and beta chains forms a heterodimer (MHCII) that associates with the CD74/invariant chain (Ii) in the endoplasmic reticulum (ER). Ii is a trimer composed of three subunits and each subunit interacts with one MHCII dimer, blocking the peptide-binding cleft. As a result, MHCII molecules cannot bind peptides present in the ER. The complex of MHCII and CD74/Ii is transported in vesicles from ER to Golgi to lysosomes, where it encounters antigenic peptides generated via proteolysis of endocytosed antigens. MHCII dimers are dissociated from CD74/Ii by the combined action of proteolysis and HLA-DM. Lysosomal enzymes such as cathepsin, degrade CD74/Ii leaving a 24 amino acid remnant called class II-associated Ii or CLIP. Interacts (via the peptide binding cleft) with CLIP; this interaction inhibits antigen peptide binding before entry in the endosomal compartment. The displacement of CLIP and replacement by a high affinity peptide in lysosomes is performed by HLA-DM heterodimer. HLA-DM catalyzes CLIP dissociation from MHCII, stabilizes empty MHCII and mediates the selection of high affinity peptides. Interacts with HLA-DM heterodimer; this interaction is direct. Interacts with TCR (via CDR3). Interacts (via beta-2 domain) with CD4 coreceptor (via Ig-like V-type domain); this interaction is of exceptionally low affinity yet necessary for optimal recognition of antigenic peptides. In terms of processing, ubiquitinated by MARCHF1 and MARCHF8 at Lys-254 leading to sorting into the endosome system and down-regulation of MHC class II. Expressed in professional APCs: monocyte/macrophages, dendritic cells and B cells (at protein level).

The protein localises to the cell membrane. It localises to the endoplasmic reticulum membrane. Its subcellular location is the lysosome membrane. It is found in the late endosome membrane. The protein resides in the autolysosome membrane. A beta chain of antigen-presenting major histocompatibility complex class II (MHCII) molecule. In complex with the alpha chain HLA-DRA, displays antigenic peptides on professional antigen presenting cells (APCs) for recognition by alpha-beta T cell receptor (TCR) on HLA-DRB3-restricted CD4-positive T cells. This guides antigen-specific T-helper effector functions, both antibody-mediated immune response and macrophage activation, to ultimately eliminate the infectious agents and transformed cells. Typically presents extracellular peptide antigens of 10 to 30 amino acids that arise from proteolysis of endocytosed antigens in lysosomes. In the tumor microenvironment, presents antigenic peptides that are primarily generated in tumor-resident APCs likely via phagocytosis of apoptotic tumor cells or macropinocytosis of secreted tumor proteins. Presents peptides derived from intracellular proteins that are trapped in autolysosomes after macroautophagy, a mechanism especially relevant for T cell selection in the thymus and central immune tolerance. The selection of the immunodominant epitopes follows two processing modes: 'bind first, cut/trim later' for pathogen-derived antigenic peptides and 'cut first, bind later' for autoantigens/self-peptides. The anchor residue at position 1 of the peptide N-terminus, usually a large hydrophobic residue, is essential for high affinity interaction with MHCII molecules. Its function is as follows. ALLELE DRB3*01:01: Exclusively presents several immunogenic epitopes derived from C.tetani neurotoxin tetX, playing a significant role in immune recognition and long-term protection. Presents viral epitopes derived from HHV-6B U11, TRX2/U56 and U85 antigens to polyfunctional CD4-positive T cells with cytotoxic activity implicated in control of HHV-6B infection. In terms of biological role, ALLELE DRB3*02:02 Exclusively presents several immunogenic epitopes derived from C.tetani neurotoxin tetX, playing a significant role in immune recognition and long-term protection. Upon EBV infection, presents to CD4-positive T cells latent antigen EBNA2 (PRSPTVFYNIPPMPLPPSQL) and lytic antigen BZLF1 (LTAYHVSTAPTGSWF) peptides, driving oligoclonal expansion and selection of virus-specific memory T cell subsets with cytotoxic potential to directly eliminate virus-infected B cells. Presents viral epitopes derived from HHV-6B U11, gB/U39 and gH/U48 antigens to polyfunctional CD4-positive T cells with cytotoxic activity implicated in control of HHV-6B infection. Plays a minor role in CD4-positive T cell immune response against Dengue virus by presenting conserved peptides from capsid and non-structural NS3 proteins. Displays peptides derived from IAV matrix protein M, implying a role in protection against IAV infection. In the context of tumor immunesurveillance, may present to T-helper 1 cells an immunogenic epitope derived from tumor-associated antigen WT1 (KRYFKLSHLQMHSRKH), likely providing for effective antitumor immunity in a wide range of solid and hematological malignancies. Presents to Vbeta2-positive T-helper 1 cells specifically an immunodominant peptide derived from tumor antigen CTAG1A/NY-ESO-1(PGVLLKEFTVSGNILTIRLTAADHR) and confers protective memory response. In metastatic epithelial tumors, presents to intratumoral CD4-positive T cells a TP53 neoantigen (HYNYMCNSSCMGSMNRRPILTIITL) carrying G245S hotspot driver mutation and may mediate tumor regression. Functionally, ALLELE DRB3*03:01: Presents a series of conserved peptides derived from the M.tuberculosis PPE family of proteins, in particular PPE29 and PPE33, known to be highly immunogenic. Presents immunogenic epitopes derived from C.tetani neurotoxin tetX, playing a role in immune recognition and long-term protection. Displays immunodominant viral peptides from HCV non-structural protein NS2, as part of a broad range T-helper response to resolve infection. This Homo sapiens (Human) protein is HLA class II histocompatibility antigen, DR beta 3 chain (HLA-DRB3).